Reading from the N-terminus, the 101-residue chain is Small ribosomal subunit protein uS14 (101 aa).

Belongs to the universal ribosomal protein uS14 family. As to quaternary structure, part of the 30S ribosomal subunit. Contacts proteins S3 and S10.

Its function is as follows. Binds 16S rRNA, required for the assembly of 30S particles and may also be responsible for determining the conformation of the 16S rRNA at the A site. The sequence is that of Small ribosomal subunit protein uS14 from Shewanella putrefaciens (strain CN-32 / ATCC BAA-453).